A 168-amino-acid chain; its full sequence is Phosphopantetheine adenylyltransferase (168 aa).

Residue T14 participates in substrate binding. Residues 14–15 (TF) and H22 contribute to the ATP site. Substrate-binding residues include K46, L78, and R92. Residues 93–95 (GLR), E103, and 128–134 (YSFISSS) each bind ATP.

This sequence belongs to the bacterial CoaD family. As to quaternary structure, homohexamer. Mg(2+) serves as cofactor.

It localises to the cytoplasm. It catalyses the reaction (R)-4'-phosphopantetheine + ATP + H(+) = 3'-dephospho-CoA + diphosphate. It participates in cofactor biosynthesis; coenzyme A biosynthesis; CoA from (R)-pantothenate: step 4/5. Reversibly transfers an adenylyl group from ATP to 4'-phosphopantetheine, yielding dephospho-CoA (dPCoA) and pyrophosphate. This is Phosphopantetheine adenylyltransferase from Xanthomonas campestris pv. campestris (strain B100).